We begin with the raw amino-acid sequence, 603 residues long: Elongation factor 4 (603 aa).

The tr-type G domain occupies Ser-7–Gln-189. GTP contacts are provided by residues Asp-19–Thr-24 and Asn-136–Asp-139.

This sequence belongs to the TRAFAC class translation factor GTPase superfamily. Classic translation factor GTPase family. LepA subfamily.

Its subcellular location is the cell inner membrane. It catalyses the reaction GTP + H2O = GDP + phosphate + H(+). Functionally, required for accurate and efficient protein synthesis under certain stress conditions. May act as a fidelity factor of the translation reaction, by catalyzing a one-codon backward translocation of tRNAs on improperly translocated ribosomes. Back-translocation proceeds from a post-translocation (POST) complex to a pre-translocation (PRE) complex, thus giving elongation factor G a second chance to translocate the tRNAs correctly. Binds to ribosomes in a GTP-dependent manner. The sequence is that of Elongation factor 4 from Rippkaea orientalis (strain PCC 8801 / RF-1) (Cyanothece sp. (strain PCC 8801)).